Consider the following 235-residue polypeptide: Heme oxygenase (235 aa).

Residue His19 participates in heme b binding.

Belongs to the heme oxygenase family.

The protein resides in the plastid. The protein localises to the chloroplast. It carries out the reaction heme b + 3 reduced [NADPH--hemoprotein reductase] + 3 O2 = biliverdin IXalpha + CO + Fe(2+) + 3 oxidized [NADPH--hemoprotein reductase] + 3 H2O + H(+). Functionally, catalyzes the opening of the heme ring with the release of iron. Key enzyme in the synthesis of the chromophoric part of the photosynthetic antennae. This Rhodella violacea (Red alga) protein is Heme oxygenase (pbsA).